Reading from the N-terminus, the 336-residue chain is MSGKLVLVTGVTGFIGAHVAEQLLQAGYRVRGTVRSMEKADELIRLNPGLKDKIEFVIVKDVSASNAFDGVLKDVELICHIASPFFVENVTDNKSQLLDPAVKGTLGILEAAQGVKSIKRIVITSSFAAVGNFQIDPHNNKVYTEKDWNPITYEEALTTDNGIVAYCASKKLAEEAAREYVKEKKPSYDICTINPPYVYGPPIHPMKNMDSLNTSNQIFWKLIDGSKEATPFYYYYVDVRDVAAAHVFALENAKLSNGRMLVSKGVFTTGDICKVLRKEFPNKSDVIAEPVDITVDPSFFKLDNSFSKSLGFKYHSDEECYVDTAKKLWERAEEFK.

2 residues coordinate NADP(+): lysine 39 and tyrosine 166.

The protein belongs to the NAD(P)-dependent epimerase/dehydratase family. Dihydroflavonol-4-reductase subfamily.

The protein localises to the cytoplasm. It localises to the nucleus. This is an uncharacterized protein from Schizosaccharomyces pombe (strain 972 / ATCC 24843) (Fission yeast).